Consider the following 236-residue polypeptide: H2HPP isomerase (236 aa).

2 consecutive Cupin type-1 domains span residues Y40 to I106 and N151 to V215. Residues H50, H52, Q56, H91, H162, H164, Q168, and H202 each coordinate a divalent metal cation. Residue Y223 participates in substrate binding.

As to quaternary structure, monomer. The cofactor is Fe(2+). Requires Co(2+) as cofactor.

It is found in the cytoplasm. It carries out the reaction 3-[(4R)-4-hydroxycyclohexa-1,5-dien-1-yl]-2-oxopropanoate = 3-[(1E,4R)-4-hydroxycyclohex-2-en-1-ylidene]pyruvate. It functions in the pathway antibiotic biosynthesis; bacilysin biosynthesis. Part of the bacABCDEF operon responsible for the biosynthesis of the nonribosomally synthesized dipeptide antibiotic bacilysin, composed of L-alanine and L-anticapsin. Bacilysin is an irreversible inactivator of the glutaminase domain of glucosamine synthetase. BacB catalyzes the allylic isomerization of the endocyclic-delta(4),delta(8)-7R-dihydro-hydroxyphenylpyruvate (en-H2HPP) to generate a mixture of 3E,7R- and 3Z, 7R-olefins of the exocyclic-delta(3),delta(5)-dihydro-hydroxyphenylpyruvate (ex-H2HPP). This chain is H2HPP isomerase, found in Bacillus subtilis.